Consider the following 242-residue polypeptide: MTTPEPQAAFKRVMLKISGEALMGDQGFGLHPPTVERVAREVQSVHALGVEICMVIGGGNIFRGLQGSAQGMERTTADYMGMLATVMNALAMQSALEGLGIHTRVISAITMNEVAEPYIRRRAVRHLEKKRVCIFAAGTGNPYFTTDTAATLRANEMSCEAIFKGTKVDGVYDKDPAKFADAKRYDTVTYDDVLAKRLGVMDASAIALARDNNLPIIVFSLDEPGGFRGILAGEGTYTRVQD.

16 to 19 (KISG) serves as a coordination point for ATP. The involved in allosteric activation by GTP stretch occupies residues 24–29 (GDQGFG). G58 lines the UMP pocket. Residues G59 and R63 each coordinate ATP. UMP contacts are provided by residues D78 and 139 to 146 (TGNPYFTT). T166, Y172, and D175 together coordinate ATP.

The protein belongs to the UMP kinase family. As to quaternary structure, homohexamer.

It is found in the cytoplasm. It carries out the reaction UMP + ATP = UDP + ADP. It functions in the pathway pyrimidine metabolism; CTP biosynthesis via de novo pathway; UDP from UMP (UMPK route): step 1/1. With respect to regulation, allosterically activated by GTP. Inhibited by UTP. Catalyzes the reversible phosphorylation of UMP to UDP. This is Uridylate kinase from Roseobacter denitrificans (strain ATCC 33942 / OCh 114) (Erythrobacter sp. (strain OCh 114)).